The primary structure comprises 228 residues: Derlin-3 (228 aa).

The Cytoplasmic portion of the chain corresponds to 1–22 (MAGQRLAAGFLQVPAVTRAYTA). The chain crosses the membrane as a helical span at residues 23–43 (ACVLTTAAVQLELLSPFQLYF). Over 44 to 57 (NPHLVFRKFQVWRL) the chain is Lumenal. A helical transmembrane segment spans residues 58–78 (ITTFLFFGPLGFGFFFNMLFV). The Cytoplasmic portion of the chain corresponds to 79-98 (FRYCRMLEEGSFRGRKADFV). A helical transmembrane segment spans residues 99–119 (FMFLFGGVLMTLLGFLGSLFF). At 120–168 (LGQALMAMLVYVWSRRSPHVRVNFFGLLNFQAPFLPWALMGFSLLLGNS) the chain is on the lumenal side. A helical membrane pass occupies residues 169 to 189 (VVTDLLGILVGHIYYFLEDVF). Topologically, residues 190–228 (PNQPGGKRLLLTPSVLKLLLDDPQEDPDYLPLPEEQPEL) are cytoplasmic.

The protein belongs to the derlin family. As to quaternary structure, forms homo- and heterooligomers with DERL2 and, to a lesser extent, with DERL1. Interacts with VCP and EDEM1. Interacts with SELENOK and SELENOS. Interacts with the signal recognition particle/SRP and the SRP receptor; in the process of endoplasmic reticulum stress-induced pre-emptive quality control. Highly expressed in spleen, lung, liver, spleen and testis. Expressed at intermediate level in kidney. Weakly or not expressed in brain, heart and skeletal muscle.

The protein resides in the endoplasmic reticulum membrane. Functional component of endoplasmic reticulum-associated degradation (ERAD) for misfolded lumenal glycoproteins, but not that of misfolded nonglycoproteins. May act by forming a channel that allows the retrotranslocation of misfolded glycoproteins into the cytosol where they are ubiquitinated and degraded by the proteasome. May mediate the interaction between VCP and the misfolded glycoproteins. May be involved in endoplasmic reticulum stress-induced pre-emptive quality control, a mechanism that selectively attenuates the translocation of newly synthesized proteins into the endoplasmic reticulum and reroutes them to the cytosol for proteasomal degradation. The protein is Derlin-3 of Mus musculus (Mouse).